The chain runs to 705 residues: Phosphoribosylformylglycinamidine synthase subunit PurL (705 aa).

Residue His-32 is part of the active site. Tyr-35 is an ATP binding site. Mg(2+) is bound at residue Glu-76. Residues Ser-77 to His-80 and Arg-99 contribute to the substrate site. His-78 serves as the catalytic Proton acceptor. Asp-100 lines the Mg(2+) pocket. Gln-224 is a substrate binding site. Mg(2+) is bound at residue Asp-252. Substrate is bound at residue Glu-296–Gln-298. Residues Asp-471 and Gly-508 each coordinate ATP. Residue Asn-509 participates in Mg(2+) binding. Substrate is bound at residue Ser-511.

This sequence belongs to the FGAMS family. Monomer. Part of the FGAM synthase complex composed of 1 PurL, 1 PurQ and 2 PurS subunits.

Its subcellular location is the cytoplasm. The enzyme catalyses N(2)-formyl-N(1)-(5-phospho-beta-D-ribosyl)glycinamide + L-glutamine + ATP + H2O = 2-formamido-N(1)-(5-O-phospho-beta-D-ribosyl)acetamidine + L-glutamate + ADP + phosphate + H(+). The protein operates within purine metabolism; IMP biosynthesis via de novo pathway; 5-amino-1-(5-phospho-D-ribosyl)imidazole from N(2)-formyl-N(1)-(5-phospho-D-ribosyl)glycinamide: step 1/2. Functionally, part of the phosphoribosylformylglycinamidine synthase complex involved in the purines biosynthetic pathway. Catalyzes the ATP-dependent conversion of formylglycinamide ribonucleotide (FGAR) and glutamine to yield formylglycinamidine ribonucleotide (FGAM) and glutamate. The FGAM synthase complex is composed of three subunits. PurQ produces an ammonia molecule by converting glutamine to glutamate. PurL transfers the ammonia molecule to FGAR to form FGAM in an ATP-dependent manner. PurS interacts with PurQ and PurL and is thought to assist in the transfer of the ammonia molecule from PurQ to PurL. The chain is Phosphoribosylformylglycinamidine synthase subunit PurL from Pyrococcus horikoshii (strain ATCC 700860 / DSM 12428 / JCM 9974 / NBRC 100139 / OT-3).